The primary structure comprises 482 residues: tRNA sulfurtransferase (482 aa).

The 105-residue stretch at 61-165 (NQVLTAVTHT…NEKLNLVIAR (105 aa)) folds into the THUMP domain. ATP is bound by residues 183-184 (LI), Lys265, Gly287, and Gln296. An intrachain disulfide couples Cys344 to Cys456. A Rhodanese domain is found at 404–482 (LGSDVVVLDI…GYKNVKVYRP (79 aa)). Cys456 acts as the Cysteine persulfide intermediate in catalysis.

The protein belongs to the ThiI family.

Its subcellular location is the cytoplasm. The enzyme catalyses [ThiI sulfur-carrier protein]-S-sulfanyl-L-cysteine + a uridine in tRNA + 2 reduced [2Fe-2S]-[ferredoxin] + ATP + H(+) = [ThiI sulfur-carrier protein]-L-cysteine + a 4-thiouridine in tRNA + 2 oxidized [2Fe-2S]-[ferredoxin] + AMP + diphosphate. It catalyses the reaction [ThiS sulfur-carrier protein]-C-terminal Gly-Gly-AMP + S-sulfanyl-L-cysteinyl-[cysteine desulfurase] + AH2 = [ThiS sulfur-carrier protein]-C-terminal-Gly-aminoethanethioate + L-cysteinyl-[cysteine desulfurase] + A + AMP + 2 H(+). Its pathway is cofactor biosynthesis; thiamine diphosphate biosynthesis. In terms of biological role, catalyzes the ATP-dependent transfer of a sulfur to tRNA to produce 4-thiouridine in position 8 of tRNAs, which functions as a near-UV photosensor. Also catalyzes the transfer of sulfur to the sulfur carrier protein ThiS, forming ThiS-thiocarboxylate. This is a step in the synthesis of thiazole, in the thiamine biosynthesis pathway. The sulfur is donated as persulfide by IscS. The chain is tRNA sulfurtransferase from Aliivibrio salmonicida (strain LFI1238) (Vibrio salmonicida (strain LFI1238)).